Consider the following 300-residue polypeptide: Probable protein phosphatase 2C 3 (300 aa).

Positions 23–298 (IFAASEMQGW…DNMTTILVYL (276 aa)) constitute a PPM-type phosphatase domain. Residues aspartate 57, glycine 58, aspartate 237, and aspartate 289 each contribute to the Mn(2+) site.

The protein belongs to the PP2C family. Mg(2+) is required as a cofactor. It depends on Mn(2+) as a cofactor.

The protein resides in the membrane. The enzyme catalyses O-phospho-L-seryl-[protein] + H2O = L-seryl-[protein] + phosphate. The catalysed reaction is O-phospho-L-threonyl-[protein] + H2O = L-threonyl-[protein] + phosphate. Enzyme with a broad specificity. In Paramecium tetraurelia, this protein is Probable protein phosphatase 2C 3.